Reading from the N-terminus, the 148-residue chain is UPF0756 membrane protein KPK_3307 (148 aa).

The next 4 helical transmembrane spans lie at 14–34 (ALGFISHNTTVAISILVLIIV), 51–71 (LTVGIIILTIGVMAPIASGTL), 86–106 (LLAIAVGVFVSWLGGRGVSLM), and 121–141 (VLGVALFRGVPVGPLIAAGII).

This sequence belongs to the UPF0756 family.

The protein localises to the cell membrane. In Klebsiella pneumoniae (strain 342), this protein is UPF0756 membrane protein KPK_3307.